A 583-amino-acid polypeptide reads, in one-letter code: uncharacterized protein (583 aa).

Polar residues predominate over residues 1 to 38 (MGQGESIPSRQIQRDASMQAVSSESENINDSDRQNSGF). Disordered regions lie at residues 1–39 (MGQG…SGFS), 53–124 (GLRR…AIPQ), 156–197 (TQNN…TAIG), and 362–452 (NSGS…QTDH). Residues 70-80 (GNRDRTTERSA) show a composition bias toward basic and acidic residues. The span at 88–102 (SLLNRNSPSLRSLSP) shows a compositional bias: low complexity. Polar residues-rich tracts occupy residues 156-165 (TQNNQSTLAS), 172-191 (VSSS…NLES), 384-408 (LISS…NENV), and 420-452 (ASTA…QTDH). Residues 525–568 (CLVCLSNFELNDECRRLKQCNHFFHRECIDQWLTSSQNSCPLCR) form an RING-type zinc finger. A Phosphoserine modification is found at S580.

It localises to the membrane. This is an uncharacterized protein from Schizosaccharomyces pombe (strain 972 / ATCC 24843) (Fission yeast).